A 248-amino-acid polypeptide reads, in one-letter code: Proteasome subunit alpha type-7 (248 aa).

O-linked (GlcNAc) serine glycosylation occurs at Ser130. At Tyr153 the chain carries Phosphotyrosine; by ABL1 and ABL2. Lys227 bears the N6-acetyllysine mark.

It belongs to the peptidase T1A family. The 26S proteasome consists of a 20S proteasome core and two 19S regulatory subunits. The 20S proteasome core is a barrel-shaped complex made of 28 subunits that are arranged in four stacked rings. The two outer rings are each formed by seven alpha subunits, and the two inner rings are formed by seven beta subunits. The proteolytic activity is exerted by three beta-subunits PSMB5, PSMB6 and PSMB7. PSMA7 interacts directly with the PSMG1-PSMG2 heterodimer which promotes 20S proteasome assembly. Interacts with HIF1A. Interacts with RAB7A. Interacts with PRKN. Interacts with ABL1 and ABL2. Interacts with EMAP2. Interacts with MAVS. In terms of processing, phosphorylation by ABL1 or ABL2 leads to an inhibition of proteasomal activity and cell cycle transition blocks. In terms of tissue distribution, detected in liver (at protein level).

It is found in the cytoplasm. The protein localises to the nucleus. Its function is as follows. Component of the 20S core proteasome complex involved in the proteolytic degradation of most intracellular proteins. This complex plays numerous essential roles within the cell by associating with different regulatory particles. Associated with two 19S regulatory particles, forms the 26S proteasome and thus participates in the ATP-dependent degradation of ubiquitinated proteins. The 26S proteasome plays a key role in the maintenance of protein homeostasis by removing misfolded or damaged proteins that could impair cellular functions, and by removing proteins whose functions are no longer required. Associated with the PA200 or PA28, the 20S proteasome mediates ubiquitin-independent protein degradation. This type of proteolysis is required in several pathways including spermatogenesis (20S-PA200 complex) or generation of a subset of MHC class I-presented antigenic peptides (20S-PA28 complex). This chain is Proteasome subunit alpha type-7 (Psma7), found in Mus musculus (Mouse).